A 314-amino-acid polypeptide reads, in one-letter code: DNA oxidative demethylase ALKBH2 (314 aa).

Residues M1–N28 are compositionally biased toward polar residues. The interval M1 to R75 is disordered. The segment covering N57–R75 has biased composition (basic and acidic residues). Residues W132 and A160 to Y163 each bind substrate. Residues R194–L314 enclose the Fe2OG dioxygenase domain. N201–Y203 provides a ligand contact to 2-oxoglutarate. H213 and D215 together coordinate Fe cation. A substrate-binding site is contributed by D216. The interval K242 to Q271 is disordered. A Fe cation-binding site is contributed by H293. Residues R305 and R305–R311 contribute to the 2-oxoglutarate site.

This sequence belongs to the alkB family. The cofactor is Fe(2+). As to expression, expressed ubiquitously, including in seedlings, leaves and flowers.

Its subcellular location is the nucleus. The catalysed reaction is a methylated nucleobase within DNA + 2-oxoglutarate + O2 = a nucleobase within DNA + formaldehyde + succinate + CO2. Dioxygenase that repairs alkylated DNA containing 1-methyladenine and 1-ethenoadenine by oxidative demethylation. Accepts double-stranded and single-stranded substrates, with a preference for dsDNA over ssDNA. Confers resistance to methylating agents such as methylmethanesulphonate (MMS). The polypeptide is DNA oxidative demethylase ALKBH2 (ALKBH2) (Arabidopsis thaliana (Mouse-ear cress)).